Consider the following 440-residue polypeptide: 3-phosphoshikimate 1-carboxyvinyltransferase (440 aa).

The 3-phosphoshikimate site is built by K25, S26, and R30. Residue K25 coordinates phosphoenolpyruvate. Phosphoenolpyruvate contacts are provided by G96 and R124. 3-phosphoshikimate-binding residues include S168, Q169, D310, and K337. Q169 is a binding site for phosphoenolpyruvate. The active-site Proton acceptor is D310. Positions 341, 382, and 409 each coordinate phosphoenolpyruvate.

Belongs to the EPSP synthase family. In terms of assembly, monomer.

It localises to the cytoplasm. The catalysed reaction is 3-phosphoshikimate + phosphoenolpyruvate = 5-O-(1-carboxyvinyl)-3-phosphoshikimate + phosphate. The protein operates within metabolic intermediate biosynthesis; chorismate biosynthesis; chorismate from D-erythrose 4-phosphate and phosphoenolpyruvate: step 6/7. In terms of biological role, catalyzes the transfer of the enolpyruvyl moiety of phosphoenolpyruvate (PEP) to the 5-hydroxyl of shikimate-3-phosphate (S3P) to produce enolpyruvyl shikimate-3-phosphate and inorganic phosphate. The sequence is that of 3-phosphoshikimate 1-carboxyvinyltransferase from Chlamydia trachomatis serovar L2 (strain ATCC VR-902B / DSM 19102 / 434/Bu).